The sequence spans 162 residues: Ribosomal RNA large subunit methyltransferase H (162 aa).

Gly108 contributes to the S-adenosyl-L-methionine binding site.

This sequence belongs to the RNA methyltransferase RlmH family. Homodimer.

Its subcellular location is the cytoplasm. The catalysed reaction is pseudouridine(1915) in 23S rRNA + S-adenosyl-L-methionine = N(3)-methylpseudouridine(1915) in 23S rRNA + S-adenosyl-L-homocysteine + H(+). Its function is as follows. Specifically methylates the pseudouridine at position 1915 (m3Psi1915) in 23S rRNA. This Methylobacterium sp. (strain 4-46) protein is Ribosomal RNA large subunit methyltransferase H.